Here is a 548-residue protein sequence, read N- to C-terminus: Natural resistance-associated macrophage protein 1 (548 aa).

The interval 1–38 (MSGDTGPPKQGGTRYGSISSPPSPEPQQAPPGGTYLSE) is disordered. The Cytoplasmic portion of the chain corresponds to 1–55 (MSGDTGPPKQGGTRYGSISSPPSPEPQQAPPGGTYLSEKIPIPDTESGTFSLRKL). Residues 56–73 (WAFTGPGFLMSIAFLDPG) form a helical membrane-spanning segment. The Extracellular portion of the chain corresponds to 74-82 (NIESDLQAG). Residues 83-102 (AVAGFKLLWVLLWATVLGLL) traverse the membrane as a helical segment. Topologically, residues 103-139 (CQRLAARLGVVTGKDLGEVCHLYYPKVPRILLWLTIE) are cytoplasmic. A helical transmembrane segment spans residues 140–160 (LAIVGSDMQEVIGTAIAFSLL). Topologically, residues 161–164 (SAGR) are extracellular. The helical transmembrane segment at 165-184 (IPLWGGVLITIVDAFFFLFL) threads the bilayer. Residues 185 to 193 (DNYGLRKLE) lie on the Cytoplasmic side of the membrane. Residues 194-214 (AFFGFLITIMALTFGYEYVVA) traverse the membrane as a helical segment. The Extracellular portion of the chain corresponds to 215-237 (QPAQGALLQGLFLPSCPGCGQPE). Residues 238 to 256 (LLQAVGIIGAIIMPHNIYL) traverse the membrane as a helical segment. Over 257–284 (HSSLVKSREVDRSRRADIREANMYFLIE) the chain is Cytoplasmic. Residues 285–304 (ATIALSVSFLINLFVMAVFG) traverse the membrane as a helical segment. Over 305–346 (QAFYKQTNQAAFNICANSSLQDYAPIFPRNNLTVAVDIYQGG) the chain is Extracellular. N-linked (GlcNAc...) asparagine glycosylation is found at N321 and N335. The chain crosses the membrane as a helical span at residues 347 to 366 (VILGCLFGPAALYIWAVGLL). Residues 367–397 (AAGQSSTMTGTYAGQFVMEGFLKLRWSRFAR) are Cytoplasmic-facing. Residues 398–415 (VLLTRSCAILPTVLLAVF) form a helical membrane-spanning segment. Residues 416–426 (RDLRDLSGLND) are Extracellular-facing. Residues 427–447 (LLNVLQSLLLPFAVLPILTFT) form a helical membrane-spanning segment. At 448 to 463 (SMPALMREFANGLVSK) the chain is on the cytoplasmic side. A helical transmembrane segment spans residues 464-485 (VITSSIMVLVCAVNLYFVISYV). Residues 486-493 (PSLPHPAY) are Extracellular-facing. Residues 494–513 (FSLVALLAAAYLGLTTYLVW) form a helical membrane-spanning segment. At 514-548 (TCLITQGATLLAHSSHQRFLYGLPEEDQEKGRTSG) the chain is on the cytoplasmic side.

It belongs to the NRAMP family.

It localises to the late endosome membrane. Its subcellular location is the lysosome membrane. It catalyses the reaction Zn(2+)(in) + H(+)(out) = Zn(2+)(out) + H(+)(in). The enzyme catalyses Fe(2+)(in) + H(+)(out) = Fe(2+)(out) + H(+)(in). The catalysed reaction is Mn(2+)(in) + H(+)(out) = Mn(2+)(out) + H(+)(in). Its function is as follows. Macrophage-specific antiporter that fluxes metal ions in either direction against a proton gradient. Localized to late endosomal lysosomal membranes, delivers bivalent cations from the cytosol into these acidic compartments where they may directly affect antimicrobial activity. Involved in iron metabolism and host natural resistance to infection with intracellular parasites. Pathogen resistance involves sequestration of Fe(2+) and Mn(2+), cofactors of both prokaryotic and eukaryotic catalases and superoxide dismutases, not only to protect the macrophage against its own generation of reactive oxygen species, but to deny the cations to the pathogen for synthesis of its protective enzymes. The chain is Natural resistance-associated macrophage protein 1 (SLC11A1) from Bison bison (American bison).